The following is a 348-amino-acid chain: Rhodopsin (348 aa).

N-acetylmethionine is present on methionine 1. Over 1–36 (MNGTEGPNFYVPFSNKTGVVRSPFEYPQYYLAEPWQ) the chain is Extracellular. N-linked (GlcNAc...) asparagine glycans are attached at residues asparagine 2 and asparagine 15. A helical membrane pass occupies residues 37–61 (FSMLAAYMFLLIVLGFPINFLTLYV). At 62 to 73 (TVQHKKLRTPLN) the chain is on the cytoplasmic side. The helical transmembrane segment at 74–96 (YILLNLAVADLFMVFGGFTTTLY) threads the bilayer. The Extracellular portion of the chain corresponds to 97–110 (TSLHGYFVFGPTGC). A disulfide bridge links cysteine 110 with cysteine 187. Residues 111–133 (NVEGFFATLGGEIALWSLVVLAI) form a helical membrane-spanning segment. A 'Ionic lock' involved in activated form stabilization motif is present at residues 134-136 (ERY). Over 134–152 (ERYVVVCKPMSNFRFGENH) the chain is Cytoplasmic. A helical membrane pass occupies residues 153 to 173 (AIMGVAFTWVMALACAAPPLA). Residues 174 to 202 (GWSRYIPEGMQCSCGIDYYTLKPEINNES) are Extracellular-facing. Zn(2+) is bound at residue glutamate 201. The helical transmembrane segment at 203–224 (FVIYMFVVHFAIPMIVIFFCYG) threads the bilayer. The Cytoplasmic portion of the chain corresponds to 225 to 252 (QLVFTVKEAAAQQQESATTQKAEKEVTR). A helical membrane pass occupies residues 253 to 274 (MVIIMVIAFLICWVPYASVAFY). At 275-286 (IFTHQGSDFGPI) the chain is on the extracellular side. Glutamine 279 provides a ligand contact to Zn(2+). A helical membrane pass occupies residues 287–308 (FMTLPAFFAKSSSIYNPVIYIM). Lysine 296 is subject to N6-(retinylidene)lysine. Topologically, residues 309–348 (MNKQFRNCMITTLCCGKNPLGDDEASASASKTETSQVAPA) are cytoplasmic. 2 S-palmitoyl cysteine lipidation sites follow: cysteine 322 and cysteine 323. The interaction with SAG stretch occupies residues 330–348 (DDEASASASKTETSQVAPA). Phosphoserine is present on residues serine 334 and serine 338. Phosphothreonine is present on residues threonine 340 and threonine 342. At serine 343 the chain carries Phosphoserine.

This sequence belongs to the G-protein coupled receptor 1 family. Opsin subfamily. As to quaternary structure, homodimer. May form a complex composed of RHO, GRK1 and RCVRN in a Ca(2+)-dependent manner; RCVRN prevents the interaction between GRK1 and RHO. Interacts with GRK1. Interacts (phosphorylated form) with SAG. Interacts with GNAT1. Interacts with GNAT3. SAG and G-proteins compete for a common binding site. Interacts with PRCD; the interaction promotes PRCD stability. Forms a complex with ASAP1 and ARF4. Forms a complex with ASAP1, RAB11A, Rabin8/RAB3IP, ARF4 and RAB11FIP3; the complex regulates Golgi-to-cilia rhodopsin/RHO transport in photoreceptors. In terms of processing, phosphorylated on some or all of the serine and threonine residues present in the C-terminal region. Post-translationally, contains one covalently linked retinal chromophore. Upon light absorption, the covalently bound 11-cis-retinal is converted to all-trans-retinal. After hydrolysis of the Schiff base and release of the covalently bound all-trans-retinal, active rhodopsin is regenerated by binding of a fresh molecule of 11-cis-retinal.

It localises to the membrane. Its subcellular location is the cell projection. It is found in the cilium. The protein resides in the photoreceptor outer segment. Photoreceptor required for image-forming vision at low light intensity. Required for photoreceptor cell viability after birth. Light-induced isomerization of 11-cis to all-trans retinal triggers a conformational change that activates signaling via G-proteins. Subsequent receptor phosphorylation mediates displacement of the bound G-protein alpha subunit by the arrestin SAG and terminates signaling. This Canis lupus familiaris (Dog) protein is Rhodopsin (RHO).